The sequence spans 156 residues: Small ribosomal subunit protein uS7 (156 aa).

The protein belongs to the universal ribosomal protein uS7 family. In terms of assembly, part of the 30S ribosomal subunit. Contacts proteins S9 and S11.

Its function is as follows. One of the primary rRNA binding proteins, it binds directly to 16S rRNA where it nucleates assembly of the head domain of the 30S subunit. Is located at the subunit interface close to the decoding center, probably blocks exit of the E-site tRNA. This Staphylococcus aureus (strain bovine RF122 / ET3-1) protein is Small ribosomal subunit protein uS7.